The sequence spans 313 residues: Ribose-phosphate pyrophosphokinase (313 aa).

ATP is bound by residues 37-39 (DGE) and 96-97 (RQ). Mg(2+) contacts are provided by histidine 131 and aspartate 170. The active site involves lysine 193. D-ribose 5-phosphate-binding positions include arginine 195, aspartate 219, and 223–227 (DTAGT).

The protein belongs to the ribose-phosphate pyrophosphokinase family. Class I subfamily. As to quaternary structure, homohexamer. The cofactor is Mg(2+).

The protein localises to the cytoplasm. The enzyme catalyses D-ribose 5-phosphate + ATP = 5-phospho-alpha-D-ribose 1-diphosphate + AMP + H(+). Its pathway is metabolic intermediate biosynthesis; 5-phospho-alpha-D-ribose 1-diphosphate biosynthesis; 5-phospho-alpha-D-ribose 1-diphosphate from D-ribose 5-phosphate (route I): step 1/1. Functionally, involved in the biosynthesis of the central metabolite phospho-alpha-D-ribosyl-1-pyrophosphate (PRPP) via the transfer of pyrophosphoryl group from ATP to 1-hydroxyl of ribose-5-phosphate (Rib-5-P). The polypeptide is Ribose-phosphate pyrophosphokinase (Pseudomonas putida (strain ATCC 47054 / DSM 6125 / CFBP 8728 / NCIMB 11950 / KT2440)).